Here is a 138-residue protein sequence, read N- to C-terminus: Large ribosomal subunit protein uL16c (138 aa).

A disordered region spans residues 1-21 (MLSPQKTKFRKQHRGRMKGVS). Residues 7 to 21 (TKFRKQHRGRMKGVS) show a composition bias toward basic residues.

This sequence belongs to the universal ribosomal protein uL16 family. As to quaternary structure, part of the 50S ribosomal subunit.

It is found in the plastid. The protein localises to the chloroplast. This Cycas taitungensis (Prince sago) protein is Large ribosomal subunit protein uL16c.